We begin with the raw amino-acid sequence, 279 residues long: Large ribosomal subunit protein uL2 (279 aa).

2 disordered regions span residues 31-61 (KSLLEPLTKSGGRNSAGRKTSRHRGGGHKRH) and 222-279 (GMAM…RNAK). The span at 49–61 (KTSRHRGGGHKRH) shows a compositional bias: basic residues. Positions 232–242 (MGGGEGKSKSG) are enriched in gly residues. Basic residues predominate over residues 259–268 (LKTRNRKKAS).

The protein belongs to the universal ribosomal protein uL2 family. Part of the 50S ribosomal subunit. Forms a bridge to the 30S subunit in the 70S ribosome.

One of the primary rRNA binding proteins. Required for association of the 30S and 50S subunits to form the 70S ribosome, for tRNA binding and peptide bond formation. It has been suggested to have peptidyltransferase activity; this is somewhat controversial. Makes several contacts with the 16S rRNA in the 70S ribosome. This chain is Large ribosomal subunit protein uL2, found in Chlorobium chlorochromatii (strain CaD3).